Here is a 730-residue protein sequence, read N- to C-terminus: Acetylene hydratase (730 aa).

2 residues coordinate [4Fe-4S] cluster: cysteine 9 and cysteine 12. Aspartate 13 is a catalytic residue. Residues cysteine 16 and cysteine 46 each contribute to the [4Fe-4S] cluster site. W-bis(molybdopterin guanine dinucleotide) is bound by residues lysine 48, 111–114 (TEIN), cysteine 141, 172–173 (KN), 177–179 (HNW), 199–202 (LDPR), 218–221 (YGTD), serine 296, glutamine 300, 416–418 (ASN), 422–423 (GY), 442–444 (YDQ), aspartate 460, arginine 465, 602–613 (FAGLREDSNFQS), arginine 606, histidine 676, aspartate 699, and arginine 720.

The protein belongs to the prokaryotic molybdopterin-containing oxidoreductase family. In terms of assembly, monomer. [4Fe-4S] cluster is required as a cofactor. Requires W-bis(molybdopterin guanine dinucleotide) as cofactor.

The catalysed reaction is acetaldehyde = acetylene + H2O. Catalyzes the hydration of acetylene to form acetaldehyde. Ethylene cannot act as a substrate. The protein is Acetylene hydratase of Syntrophotalea acetylenica (Pelobacter acetylenicus).